The primary structure comprises 234 residues: 2-C-methyl-D-erythritol 4-phosphate cytidylyltransferase (234 aa).

Belongs to the IspD/TarI cytidylyltransferase family. IspD subfamily.

It catalyses the reaction 2-C-methyl-D-erythritol 4-phosphate + CTP + H(+) = 4-CDP-2-C-methyl-D-erythritol + diphosphate. Its pathway is isoprenoid biosynthesis; isopentenyl diphosphate biosynthesis via DXP pathway; isopentenyl diphosphate from 1-deoxy-D-xylulose 5-phosphate: step 2/6. Functionally, catalyzes the formation of 4-diphosphocytidyl-2-C-methyl-D-erythritol from CTP and 2-C-methyl-D-erythritol 4-phosphate (MEP). The polypeptide is 2-C-methyl-D-erythritol 4-phosphate cytidylyltransferase (Desulforamulus reducens (strain ATCC BAA-1160 / DSM 100696 / MI-1) (Desulfotomaculum reducens)).